A 405-amino-acid polypeptide reads, in one-letter code: Cystathionine gamma-lyase (405 aa).

R62, Y114, and R119 together coordinate substrate. An N6-(pyridoxal phosphate)lysine modification is found at K212. Position 339 (E339) interacts with substrate.

Belongs to the trans-sulfuration enzymes family. As to quaternary structure, homotetramer. Interacts with CALM in a calcium-dependent manner. It depends on pyridoxal 5'-phosphate as a cofactor.

Its subcellular location is the cytoplasm. The catalysed reaction is L,L-cystathionine + H2O = 2-oxobutanoate + L-cysteine + NH4(+). It catalyses the reaction L-cysteine + H2O = hydrogen sulfide + pyruvate + NH4(+) + H(+). The enzyme catalyses L-homocysteine + H2O = 2-oxobutanoate + hydrogen sulfide + NH4(+) + H(+). It carries out the reaction L-homoserine = 2-oxobutanoate + NH4(+). The catalysed reaction is L-selenocystathionine + H2O = L-selenocysteine + 2-oxobutanoate + NH4(+). It participates in amino-acid biosynthesis; L-cysteine biosynthesis; L-cysteine from L-homocysteine and L-serine: step 2/2. Catalyzes the last step in the trans-sulfuration pathway from L-methionine to L-cysteine in a pyridoxal-5'-phosphate (PLP)-dependent manner, which consists on cleaving the L,L-cystathionine molecule into L-cysteine, ammonia and 2-oxobutanoate. Part of the L-cysteine derived from the trans-sulfuration pathway is utilized for biosynthesis of the ubiquitous antioxidant glutathione. Besides its role in the conversion of L-cystathionine into L-cysteine, it utilizes L-cysteine and L-homocysteine as substrates (at much lower rates than L,L-cystathionine) to produce hydrogen sulfide (H2S). In vitro, it converts two L-cysteine molecules into lanthionine and H2S, and two L-homocysteine molecules to homolanthionine and H2S, which can be particularly relevant under conditions of severe hyperhomocysteinemia. Lanthionine and homolanthionine are structural homologs of L,L-cystathionine that differ by the absence or presence of an extra methylene group, respectively. Acts as a cysteine-protein sulfhydrase by mediating sulfhydration of target proteins: sulfhydration consists of converting -SH groups into -SSH on specific cysteine residues of target proteins such as GAPDH, PTPN1 and NF-kappa-B subunit RELA, thereby regulating their function. By generating the gasotransmitter H2S, it participates in a number of physiological processes such as vasodilation, bone protection, and inflammation. Plays an essential role in myogenesis by contributing to the biogenesis of H2S in skeletal muscle tissue. Can also accept homoserine as substrate. Catalyzes the elimination of selenocystathionine (which can be derived from the diet) to yield selenocysteine, ammonia and 2-oxobutanoate. The polypeptide is Cystathionine gamma-lyase (CTH) (Sus scrofa (Pig)).